We begin with the raw amino-acid sequence, 419 residues long: MDVKAPRGTNDILPPVSLKWQYIEDTARRIFQMYNYKEIRTPIFEYTELFQRGIGETTDIVEKEMYTFEDKGGRSITLRPEGTASVVRAFLEHKIYGQVQPTKYFYIGPMFRYERPQAGRFRQFHQLGVEAFGSNDPALDAEVIALGLDILKRLGLTDVEVFINSIGCPECRARYSDELKQYLESHQDRLCKDCKARLNKNPLRILDCKNEECSLVIKNAPKILDYLCDNCRVHFEDVQEYLDLLGIKYRVDPTLVRGLDYYTNTAFEIKFKELGAQDAIFGGGRYNGLTEEIGNKSIPGIGFAVGIERLILALDKKGIKLPVNDSIDVYLVTIGERAKRAAFNYTYLLRESGITAEIDYLGRSIKSQMKSADRTGASYTIIIGDSELDSGKATVKNMRTGEQVEIMLANLIEEMQKLV.

This sequence belongs to the class-II aminoacyl-tRNA synthetase family. Homodimer.

The protein localises to the cytoplasm. The enzyme catalyses tRNA(His) + L-histidine + ATP = L-histidyl-tRNA(His) + AMP + diphosphate + H(+). This chain is Histidine--tRNA ligase, found in Halothermothrix orenii (strain H 168 / OCM 544 / DSM 9562).